A 1465-amino-acid chain; its full sequence is Claspin (1465 aa).

Over residues M1–A12 the composition is skewed to low complexity. Disordered regions lie at residues M1–V490, A544–M566, and A585–M636. S45, S49, S52, S64, S75, S109, and S114 each carry phosphoserine. A compositionally biased stretch (basic and acidic residues) spans Q121–Q133. Basic residues predominate over residues K154 to K163. Residues E205–A216 show a composition bias toward basic and acidic residues. Positions K217–Q228 are enriched in basic residues. 4 stretches are compositionally biased toward basic and acidic residues: residues K229–K246, K254–S263, E273–K286, and T296–V335. Residues K260–D281 adopt a coiled-coil conformation. A compositionally biased stretch (basic residues) spans K336–Q346. Phosphoserine is present on residues S350 and S354. The span at Q358–S373 shows a compositional bias: basic and acidic residues. Positions N375–M388 are enriched in acidic residues. Phosphoserine is present on residues S381, S404, S406, S432, S434, S444, S456, S458, and S468. Positions Q400–K417 are enriched in basic and acidic residues. Acidic residues predominate over residues S432–E441. A compositionally biased stretch (acidic residues) spans S456–G470. The stretch at L564 to E587 forms a coiled coil. The segment covering E594–P606 has biased composition (acidic residues). T693 bears the Phosphothreonine mark. The stretch at L839 to E874 forms a coiled coil. Residues M845 to M859 show a composition bias toward basic and acidic residues. The disordered stretch occupies residues M845 to S977. Composition is skewed to acidic residues over residues A860–P875, A913–P942, and D960–D969. The residue at position 963 (S963) is a Phosphoserine. T973 bears the Phosphothreonine mark. S990 carries the post-translational modification Phosphoserine. The segment at C1058–T1154 is disordered. Residues P1067–E1076 show a composition bias toward low complexity. S1093 and S1094 each carry phosphoserine. The segment covering S1094 to L1103 has biased composition (acidic residues). Positions R1109–K1123 are enriched in basic residues. Acidic residues predominate over residues S1127 to T1154. A Phosphoserine modification is found at S1287.

The protein belongs to the claspin family. Phosphorylated in response to DNA damage by IR and HU treatment. Phosphorylation does not require mei-41 or tefu. As to expression, detected in the ovary but not in the testis (at protein level).

It localises to the nucleus. Functionally, required for checkpoint signaling in response to DNA replication stress; either resulting from normal embryogenesis or induced by the DNA synthesis inhibitor hydroxyurea (HU). It is not required for the G2 arrest resulting from DNA double strand breaks induced by ionizing irradiation (IR). Necessary for the timely phosphorylation of Cdk1 at the mid-blastula transition. May have a minor role in maintaining genomic stability in mitotic cells. This Drosophila melanogaster (Fruit fly) protein is Claspin.